The following is a 118-amino-acid chain: Cell division protein SepF (118 aa).

The tract at residues 1–12 is important for localization in a ring-like structure at midcell; that stretch reads MGIMSKILGGGG.

In terms of assembly, homodimer. Does not oligomerize. Interacts with FtsZ2.

The protein resides in the cytoplasm. Its function is as follows. Involved in cell division. Probably acts as a membrane anchor for FstZ2, tethering its filaments to the division site. May be involved in septum closure. The polypeptide is Cell division protein SepF (Haloferax volcanii (strain ATCC 29605 / DSM 3757 / JCM 8879 / NBRC 14742 / NCIMB 2012 / VKM B-1768 / DS2) (Halobacterium volcanii)).